Here is a 50-residue protein sequence, read N- to C-terminus: Temporin-SHa (50 aa).

An N-terminal signal peptide occupies residues 1–10 (FLGTINLSLC). The propeptide occupies 11-35 (EQERDADEEERRDEPNESNVEVEKR). Phe-48 is modified (phenylalanine amide).

It belongs to the frog skin active peptide (FSAP) family. Temporin subfamily. In terms of tissue distribution, expressed by the skin glands.

The protein localises to the secreted. Its subcellular location is the target cell membrane. Amphipathic alpha-helical antimicrobial peptide with highly potent activity against Gram-positive bacteria, and potent activity Gram-negative bacteria and fungi (MIC=2-30 uM). Acts through membranolytic mechanism involving rapid membrane permeabilization and depolarization. Shows a direct extra-cellular antiviral activity probably through degradation of the viral envelope. Also shows a weak indirect antiviral activity by inhibiting virus replication. Also displays anti-trypanosoma and anti-leishmania (prosmastigotes and axenic amastigotes) activity through membranolytic mechanism. Also induces apoptosis in leishmania promastigotes at high peptide concentrations. Shows moderate hemolytic activity (LC(50)=25 uM). In contrast to many antibiotics, this peptide does not induce bacterial resistance. The sequence is that of Temporin-SHa from Pelophylax saharicus (Sahara frog).